A 35-amino-acid chain; its full sequence is Photosystem II reaction center protein T (35 aa).

The chain crosses the membrane as a helical span at residues 3-23; it reads ALVYTFLLVSTLGIIFFAIFF.

The protein belongs to the PsbT family. As to quaternary structure, PSII is composed of 1 copy each of membrane proteins PsbA, PsbB, PsbC, PsbD, PsbE, PsbF, PsbH, PsbI, PsbJ, PsbK, PsbL, PsbM, PsbT, PsbY, PsbZ, Psb30/Ycf12, at least 3 peripheral proteins of the oxygen-evolving complex and a large number of cofactors. It forms dimeric complexes.

It is found in the plastid. The protein localises to the chloroplast thylakoid membrane. Functionally, found at the monomer-monomer interface of the photosystem II (PS II) dimer, plays a role in assembly and dimerization of PSII. PSII is a light-driven water plastoquinone oxidoreductase, using light energy to abstract electrons from H(2)O, generating a proton gradient subsequently used for ATP formation. The sequence is that of Photosystem II reaction center protein T from Oenothera argillicola (Appalachian evening primrose).